We begin with the raw amino-acid sequence, 112 residues long: Putative pterin-4-alpha-carbinolamine dehydratase (112 aa).

This sequence belongs to the pterin-4-alpha-carbinolamine dehydratase family.

The catalysed reaction is (4aS,6R)-4a-hydroxy-L-erythro-5,6,7,8-tetrahydrobiopterin = (6R)-L-erythro-6,7-dihydrobiopterin + H2O. This Shewanella frigidimarina (strain NCIMB 400) protein is Putative pterin-4-alpha-carbinolamine dehydratase.